Consider the following 193-residue polypeptide: Ion-translocating oxidoreductase complex subunit A (193 aa).

6 helical membrane passes run 5–25, 39–59, 62–82, 102–122, 134–154, and 171–191; these read LLLFVGTVLVNNFVLVKFLGL, IGMGLATTFVLTLASVCAWMV, FILLPLGLIYLRTLAFILVIA, LLGIFLPLITTNCAVLGVALL, AVYGFSAAAGFSLVMVLFAAI, and SIALITAGLMSLAFMGFTGLV.

The protein belongs to the NqrDE/RnfAE family. The complex is composed of six subunits: RnfA, RnfB, RnfC, RnfD, RnfE and RnfG.

The protein localises to the cell inner membrane. Its function is as follows. Part of a membrane-bound complex that couples electron transfer with translocation of ions across the membrane. The sequence is that of Ion-translocating oxidoreductase complex subunit A from Yersinia pestis (strain Pestoides F).